The primary structure comprises 68 residues: U1-agatoxin-Ta1c (68 aa).

The N-terminal stretch at 1-17 is a signal peptide; sequence MKLQLMICLVLLPCFFC. Cystine bridges form between cysteine 23–cysteine 53, cysteine 39–cysteine 49, and cysteine 42–cysteine 62. Lysine 67 bears the Lysine amide mark.

Belongs to the helical arthropod-neuropeptide-derived (HAND) family. In terms of tissue distribution, expressed by the venom gland.

It is found in the secreted. In terms of biological role, toxin that paralyzes insects. May have a direct effect on the insect central nervous system. This Eratigena agrestis (Hobo spider) protein is U1-agatoxin-Ta1c.